Here is a 276-residue protein sequence, read N- to C-terminus: Mitochondrial outer membrane protein porin of 34 kDa (276 aa).

The protein belongs to the eukaryotic mitochondrial porin (TC 1.B.8.1) family.

It is found in the mitochondrion outer membrane. Its function is as follows. Forms a channel through the cell membrane that allows diffusion of small hydrophilic molecules. The channel adopts an open conformation at low or zero membrane potential and a closed conformation at potentials above 30-40 mV. The open state has a weak anion selectivity whereas the closed state is cation-selective. The protein is Mitochondrial outer membrane protein porin of 34 kDa of Solanum tuberosum (Potato).